The following is a 685-amino-acid chain: Small ribosomal subunit protein mS39 (685 aa).

Residues 1-10 constitute a mitochondrion transit peptide; sequence MAAAAVAARR. Lys127 carries the post-translational modification N6-acetyllysine. 10 PPR repeats span residues 150–184, 185–220, 254–288, 289–329, 330–366, 367–407, 412–446, 454–488, 489–523, and 572–606; these read IEDV…GTTV, SLET…ENLE, NARS…RLSA, DVYT…KVKP, NLQT…GIEP, SLAT…TFSP, DGRF…DNRK, RKVY…VFLP, HYQI…SHTF, and PANP…KKIP. A disordered region spans residues 663–685; sequence LGNLTELNSSDGESSSDSDSDDK. Over residues 676-685 the composition is skewed to acidic residues; it reads SSSDSDSDDK.

Belongs to the mitochondrion-specific ribosomal protein mS39 family. As to quaternary structure, component of the mitochondrial ribosome small subunit (28S) which comprises a 12S rRNA and about 30 distinct proteins. Associated with the 12S mitochondrial rRNA (12S mt-rRNA).

It is found in the mitochondrion. In terms of biological role, mitochondrial RNA-binding protein that has a role in mitochondrial translation. In Mus musculus (Mouse), this protein is Small ribosomal subunit protein mS39 (Ptcd3).